The following is a 131-amino-acid chain: Ribonuclease P protein component (131 aa).

The protein belongs to the RnpA family. In terms of assembly, consists of a catalytic RNA component (M1 or rnpB) and a protein subunit.

It carries out the reaction Endonucleolytic cleavage of RNA, removing 5'-extranucleotides from tRNA precursor.. Functionally, RNaseP catalyzes the removal of the 5'-leader sequence from pre-tRNA to produce the mature 5'-terminus. It can also cleave other RNA substrates such as 4.5S RNA. The protein component plays an auxiliary but essential role in vivo by binding to the 5'-leader sequence and broadening the substrate specificity of the ribozyme. The protein is Ribonuclease P protein component of Acinetobacter baylyi (strain ATCC 33305 / BD413 / ADP1).